The primary structure comprises 368 residues: Probable magnesium transporter (368 aa).

At 1–4 the chain is on the extracellular side; the sequence is MEDK. The helical transmembrane segment at 5-25 threads the bilayer; sequence YIGLALAMSSSLAIGTSFIIT. Residues 26-50 are Cytoplasmic-facing; sequence KKGLMDASARTGGTDGVQASDYLQN. The chain crosses the membrane as a helical span at residues 51 to 71; the sequence is PIWWGGMITMAIGEIANFAAY. The Extracellular portion of the chain corresponds to 72 to 76; sequence TFAPA. Residues 77-97 traverse the membrane as a helical segment; that stretch reads ILVTPLGALSVIIGAVLAAIF. The Cytoplasmic segment spans residues 98 to 101; the sequence is LKER. A helical transmembrane segment spans residues 102–122; the sequence is LGTLGKMGCAICLMGSVIIIL. At 123-143 the chain is on the extracellular side; sequence HAPPDKEVQTVDEILGYATQP. The chain crosses the membrane as a helical span at residues 144 to 164; it reads GFMFYCTVVTLYSLFMIYKIV. Over 165–175 the chain is Cytoplasmic; sequence PKYGNTNPMIY. A helical transmembrane segment spans residues 176 to 196; it reads LSICSSVGSISVMSIKAFGIA. Residues 197 to 206 lie on the Extracellular side of the membrane; the sequence is LKLTLGGNNQ. A helical transmembrane segment spans residues 207-227; it reads FTHVSTYLFLIVVALCIVTQM. Over 228 to 240 the chain is Cytoplasmic; it reads NYFNKALDQFDTS. Residues 241–261 traverse the membrane as a helical segment; sequence IVNPLYYVTFTTFTLAASFIL. The Extracellular segment spans residues 262-269; sequence FKGFNTSS. Asn-266 carries N-linked (GlcNAc...) asparagine glycosylation. Residues 270-290 traverse the membrane as a helical segment; it reads AVDIISLLIGFLIIFSGVYLL. Residues 291-368 are Cytoplasmic-facing; sequence NISRSESPMV…GDEDTRNYRH (78 aa).

The protein belongs to the NIPA family.

The protein localises to the cell membrane. It localises to the early endosome. It catalyses the reaction Mg(2+)(in) = Mg(2+)(out). Its function is as follows. Probably acts as a selective Mg(2+) transporter. Plays a role in cell wall integrity and in engulfment by host macrophages. This chain is Probable magnesium transporter, found in Candida albicans (strain SC5314 / ATCC MYA-2876) (Yeast).